The sequence spans 638 residues: Phosphomethylpyrimidine synthase (638 aa).

Substrate contacts are provided by residues asparagine 233, methionine 262, tyrosine 291, histidine 327, 347-349, 388-391, and glutamate 427; these read SRG and DGLR. Histidine 431 contacts Zn(2+). Position 454 (tyrosine 454) interacts with substrate. Histidine 495 contacts Zn(2+). The [4Fe-4S] cluster site is built by cysteine 575, cysteine 578, and cysteine 583.

Belongs to the ThiC family. As to quaternary structure, homodimer. It depends on [4Fe-4S] cluster as a cofactor.

The catalysed reaction is 5-amino-1-(5-phospho-beta-D-ribosyl)imidazole + S-adenosyl-L-methionine = 4-amino-2-methyl-5-(phosphooxymethyl)pyrimidine + CO + 5'-deoxyadenosine + formate + L-methionine + 3 H(+). It functions in the pathway cofactor biosynthesis; thiamine diphosphate biosynthesis. Functionally, catalyzes the synthesis of the hydroxymethylpyrimidine phosphate (HMP-P) moiety of thiamine from aminoimidazole ribotide (AIR) in a radical S-adenosyl-L-methionine (SAM)-dependent reaction. This is Phosphomethylpyrimidine synthase from Saccharophagus degradans (strain 2-40 / ATCC 43961 / DSM 17024).